Consider the following 155-residue polypeptide: Deoxyuridine 5'-triphosphate nucleotidohydrolase (155 aa).

Substrate contacts are provided by residues 71 to 73 (RSG), N84, 88 to 90 (TID), and K98.

It belongs to the dUTPase family. Mg(2+) is required as a cofactor.

It catalyses the reaction dUTP + H2O = dUMP + diphosphate + H(+). It participates in pyrimidine metabolism; dUMP biosynthesis; dUMP from dCTP (dUTP route): step 2/2. This enzyme is involved in nucleotide metabolism: it produces dUMP, the immediate precursor of thymidine nucleotides and it decreases the intracellular concentration of dUTP so that uracil cannot be incorporated into DNA. The protein is Deoxyuridine 5'-triphosphate nucleotidohydrolase of Corynebacterium jeikeium (strain K411).